We begin with the raw amino-acid sequence, 849 residues long: Serine/threonine-protein phosphatase 4 regulatory subunit 3B (849 aa).

The region spanning 1–100 (MSDTRRRVKV…DEIWEKICQV (100 aa)) is the WH1 domain. Ser-117 and Ser-695 each carry phosphoserine. A compositionally biased stretch (acidic residues) spans 714-724 (EMWFNEDEEEE). Residues 714-849 (EMWFNEDEEE…SPRKRPRLGS (136 aa)) form a disordered region. Over residues 733 to 764 (EKPKPEDDFPDNYEKFMETKKAKESEDKENLP) the composition is skewed to basic and acidic residues. Polar residues predominate over residues 776 to 818 (FSHSASAANGTNSKSVVAQIPPATSNGSSSKTTNLPTSVTATK). Positions 827–838 (YPDDEEEDEEEE) are enriched in acidic residues. The residue at position 840 (Ser-840) is a Phosphoserine.

Belongs to the SMEK family. In terms of assembly, serine/threonine-protein phosphatase 4 (PP4) occurs in different assemblies of the catalytic and one or more regulatory subunits. Component of the PP4 complex PPP4C-PPP4R2-PPP4R3B. Moderately expressed in tissues and specific brain regions examined.

The protein localises to the cytoplasm. The protein resides in the cytoskeleton. Its subcellular location is the microtubule organizing center. It localises to the centrosome. It is found in the nucleus. Functionally, regulatory subunit of serine/threonine-protein phosphatase 4 (PP4). May regulate the activity of PPP4C at centrosomal microtubule organizing centers. This Homo sapiens (Human) protein is Serine/threonine-protein phosphatase 4 regulatory subunit 3B.